We begin with the raw amino-acid sequence, 80 residues long: RNA-binding protein Hfq (80 aa).

The region spanning 10–70 (DLFLNTVRKQ…ISTIMPGQPM (61 aa)) is the Sm domain.

Belongs to the Hfq family. As to quaternary structure, homohexamer.

Its function is as follows. RNA chaperone that binds small regulatory RNA (sRNAs) and mRNAs to facilitate mRNA translational regulation in response to envelope stress, environmental stress and changes in metabolite concentrations. Also binds with high specificity to tRNAs. The protein is RNA-binding protein Hfq of Agrobacterium fabrum (strain C58 / ATCC 33970) (Agrobacterium tumefaciens (strain C58)).